A 341-amino-acid chain; its full sequence is Calcium-binding protein 39 (341 aa).

This sequence belongs to the Mo25 family. In terms of assembly, component of a trimeric complex composed of STK11/LKB1, STRAD (STRADA or STRADB) and CAB39/MO25 (CAB39/MO25alpha or CAB39L/MO25beta): the complex tethers STK11/LKB1 in the cytoplasm and stimulates its catalytic activity.

It localises to the cytoplasm. In terms of biological role, component of a complex that binds and activates STK11/LKB1. In the complex, required to stabilize the interaction between CAB39/MO25 (CAB39/MO25alpha or CAB39L/MO25beta) and STK11/LKB1. This Bos taurus (Bovine) protein is Calcium-binding protein 39 (CAB39).